The following is a 395-amino-acid chain: Phosphoglycerate kinase (395 aa).

Substrate-binding positions include 21–23 (DLN), arginine 36, 59–62 (HLGR), arginine 113, and arginine 146. ATP-binding positions include lysine 197, glutamate 324, and 350–353 (GGDT).

The protein belongs to the phosphoglycerate kinase family. In terms of assembly, monomer.

The protein resides in the cytoplasm. It carries out the reaction (2R)-3-phosphoglycerate + ATP = (2R)-3-phospho-glyceroyl phosphate + ADP. It participates in carbohydrate degradation; glycolysis; pyruvate from D-glyceraldehyde 3-phosphate: step 2/5. This Acinetobacter baylyi (strain ATCC 33305 / BD413 / ADP1) protein is Phosphoglycerate kinase.